The primary structure comprises 614 residues: MEVKEQLKLKELLFIMKQMPKTFKLIFTLERSLFLKLIRFSIITGILPIVSLYISQELINSLVTIRKEVSIVITIFLTYLGVSFFSELISQISEFYNGKFQLNIGYKLNYKVMKKSSNLALKDFENPEIYDKLERVTKEISYKPYQIIQAIITMTTSFVTLLSSIAFLMSWNPKVSLLLLVIPVISLFYFLKIGQEEFFIHWKRAGKERKSWYISYILTHDFSFKELKLYNLKDYLLNKYWDIKKSFIEQDTKILRKKTLLNLIYEIAVQLVGAVIIFIAIMSAFAGKIMVGNVMSYIRSVSLVQNHSQSIMTSIYSIYNSNLYMNQLYEFLELKEEKSQGHKKPIVEPIHSVVFQNVSFIYPNQGEQTLKHINVSLHKGERVAIVGPNGSGKKTFIKLLTGLYEVHEGDILINGINIKELDMDSYMNQIAALFQDFMKYEMTLKENIGFGQIDKLHQTNKMHEVLDIVRADFLKSHSSYQFDTQLGLWFDEGRQLSGGQWQKIALARAYFREASLYILDEPSSALDPIAEKETFDTFFSLSKDKIGIFISHRLVAAKLADRIIVMDKGEIVGIGTHEELLKTCPLYKKMDESENYMNPLEEEGSKWKEALYQG.

5 helical membrane passes run 34-54 (FLKL…SLYI), 69-89 (VSIV…SELI), 147-167 (IIQA…SIAF), 175-195 (VSLL…KIGQ), and 267-287 (IAVQ…AFAG). Residues 34–320 (FLKLIRFSII…IMTSIYSIYN (287 aa)) form the ABC transmembrane type-1 domain. In terms of domain architecture, ABC transporter spans 353–593 (VVFQNVSFIY…CPLYKKMDES (241 aa)). 387–394 (GPNGSGKK) contributes to the ATP binding site.

This sequence belongs to the ABC transporter superfamily.

It localises to the cell membrane. Functionally, probably implicated in the export process of the lantibiotic subtilin. The protein is Subtilin transport ATP-binding protein SpaT (spaT) of Bacillus subtilis.